A 164-amino-acid polypeptide reads, in one-letter code: Anterior gradient protein 2-B (164 aa).

The N-terminal stretch at 1 to 20 (MESVLKSLFVLLVATSFTLA) is a signal peptide. 2 short sequence motifs (homodimer stabilization; interchain) span residues 34–43 (SRGWGDNLEW) and 49–56 (EGLYKAKA).

The protein belongs to the AGR family. As to quaternary structure, monomer and homodimer.

It is found in the secreted. The protein localises to the endoplasmic reticulum. This is Anterior gradient protein 2-B (agr2-b) from Xenopus laevis (African clawed frog).